The following is a 209-amino-acid chain: MGRYTDSVCRQCRREGEKLFLKGDRCYSEKCSVSRRAYPPGAHGQGRRQKPSEYGIQLREKQKTRRIYGIQEKQFRNYFRKADRKQGITGDNLLVLLERRLDNVVYRLGFASSRKEARQLVNHGHFFINGHKANIPSMLVRVGDIIEVRQSSRESNKFQEMKEQAAYKTPPEWLSVDAEKMTGTVLAYPRREQIDTLVNEQLIVELYSR.

The region spanning Arg-99–Lys-162 is the S4 RNA-binding domain.

It belongs to the universal ribosomal protein uS4 family. Part of the 30S ribosomal subunit. Contacts protein S5. The interaction surface between S4 and S5 is involved in control of translational fidelity.

In terms of biological role, one of the primary rRNA binding proteins, it binds directly to 16S rRNA where it nucleates assembly of the body of the 30S subunit. Its function is as follows. With S5 and S12 plays an important role in translational accuracy. This is Small ribosomal subunit protein uS4 from Syntrophomonas wolfei subsp. wolfei (strain DSM 2245B / Goettingen).